The primary structure comprises 327 residues: Regulatory protein MsrR (327 aa).

A compositionally biased stretch (basic and acidic residues) spans 1–18; that stretch reads MDKETNDNEYRRQSEHRT. The segment at 1 to 24 is disordered; it reads MDKETNDNEYRRQSEHRTSAPKRK. Topologically, residues 1–31 are cytoplasmic; that stretch reads MDKETNDNEYRRQSEHRTSAPKRKKKKKIRK. Residues 32 to 52 traverse the membrane as a helical; Signal-anchor for type II membrane protein segment; sequence LPIILLIVVILLIALVVYIVH. Residues 53 to 327 are Extracellular-facing; that stretch reads SYNSGVEYAK…QAIKDFLDED (275 aa).

Belongs to the LytR/CpsA/Psr (LCP) family.

The protein resides in the cell membrane. In terms of biological role, involved in SarA attenuation. Affects resistance to oxacillin and teicoplanin, as well as the synthesis of virulence factors. The polypeptide is Regulatory protein MsrR (msrR) (Staphylococcus aureus (strain NCTC 8325 / PS 47)).